A 135-amino-acid chain; its full sequence is Ribonuclease VapC26 (135 aa).

Residues 1–118 (MIIDTSALLA…TRTILTLDRR (118 aa)) enclose the PINc domain. Residues Asp-4 and Asp-97 each coordinate Mg(2+).

The protein belongs to the PINc/VapC protein family. Mg(2+) serves as cofactor.

Toxic component of a type II toxin-antitoxin (TA) system. An RNase. Upon expression in M.smegmatis inhibits colony formation. Its toxic effect is neutralized by coexpression with cognate antitoxin VapB26. The sequence is that of Ribonuclease VapC26 from Mycobacterium tuberculosis (strain ATCC 25618 / H37Rv).